The primary structure comprises 102 residues: Protein transport protein sec61 subunit beta (102 aa).

Residues 1-15 (MSSTKASGSVKNSAA) show a composition bias toward polar residues. The segment at 1 to 53 (MSSTKASGSVKNSAASAPGGPKSQIRRRAAVEKNTKESNSGPAGARAAGAPGS) is disordered. Residues 1–72 (MSSTKASGSV…DEASGFKVDP (72 aa)) lie on the Cytoplasmic side of the membrane. The span at 41-52 (GPAGARAAGAPG) shows a compositional bias: low complexity. A helical transmembrane segment spans residues 73 to 93 (VVVMVLSVGFIASVFLLHIVA).

Belongs to the SEC61-beta family. Heterotrimeric complex composed of SEC61, SBH1 and SSS1.

The protein resides in the endoplasmic reticulum membrane. Functionally, necessary for protein translocation in the endoplasmic reticulum. This Schizosaccharomyces pombe (strain 972 / ATCC 24843) (Fission yeast) protein is Protein transport protein sec61 subunit beta (sbh1).